Reading from the N-terminus, the 163-residue chain is 6,7-dimethyl-8-ribityllumazine synthase (163 aa).

5-amino-6-(D-ribitylamino)uracil is bound by residues Phe27, 58 to 60, and 87 to 89; these read ALE and CVV. Position 92–93 (92–93) interacts with (2S)-2-hydroxy-3-oxobutyl phosphate; the sequence is DT. His95 functions as the Proton donor in the catalytic mechanism. Asn120 is a 5-amino-6-(D-ribitylamino)uracil binding site. Arg134 lines the (2S)-2-hydroxy-3-oxobutyl phosphate pocket.

The protein belongs to the DMRL synthase family.

It catalyses the reaction (2S)-2-hydroxy-3-oxobutyl phosphate + 5-amino-6-(D-ribitylamino)uracil = 6,7-dimethyl-8-(1-D-ribityl)lumazine + phosphate + 2 H2O + H(+). It functions in the pathway cofactor biosynthesis; riboflavin biosynthesis; riboflavin from 2-hydroxy-3-oxobutyl phosphate and 5-amino-6-(D-ribitylamino)uracil: step 1/2. Functionally, catalyzes the formation of 6,7-dimethyl-8-ribityllumazine by condensation of 5-amino-6-(D-ribitylamino)uracil with 3,4-dihydroxy-2-butanone 4-phosphate. This is the penultimate step in the biosynthesis of riboflavin. This chain is 6,7-dimethyl-8-ribityllumazine synthase, found in Nitrobacter winogradskyi (strain ATCC 25391 / DSM 10237 / CIP 104748 / NCIMB 11846 / Nb-255).